Reading from the N-terminus, the 406-residue chain is Glycosyltransferase GlyE (406 aa).

The tract at residues 3-265 is GT8 domain; the sequence is NTKRAVVFAG…SVILNEWFSK (263 aa). UDP contacts are provided by residues 11–16 and 106–107; these read AGDYAY and DS. Residues D106, D108, and H227 each contribute to the Mn(2+) site. Position 227 to 233 (227 to 233) interacts with UDP; sequence HYISQDK.

In the N-terminal section; belongs to the glycosyltransferase 8 family. The cofactor is Mn(2+).

The protein operates within protein modification; protein glycosylation. Involved in the polymorphic O-glycosylation of the serine-rich repeat protein PsrP. Catalyzes the third step in glycosylation of PsrP in this bacteria. Transfers galactose from UDP-galactose to the terminal glucose moiety of already-glycosylated PsrP (using the short substrate PsrP-GlcNAc-Glc). Has a very marked preference for PsrP substrate that has already been modified by GlcNAc and glucose. Has hydrolytic activity against UDP-galactose but none against UDP-glucose. Functionally, also catalyzes the fourth step in glycosylation of PsrP in this bacteria. Can transfer the sugar from UDP-galactose to the terminal sugar moiety of PsrP-GlcNAc-Glc-Glc and of PsrP-GlcNAc-Glc-Gal. The polypeptide is Glycosyltransferase GlyE (Streptococcus pneumoniae serotype 4 (strain ATCC BAA-334 / TIGR4)).